A 213-amino-acid chain; its full sequence is Pyridoxine/pyridoxamine 5'-phosphate oxidase (213 aa).

Substrate contacts are provided by residues 9-12 (RLEY) and K67. FMN-binding positions include 62-67 (RIVLLK), 77-78 (YT), R83, K84, and Q106. Residues Y124, R128, and S132 each coordinate substrate. Residues 141–142 (QS) and W185 contribute to the FMN site. 191–193 (RLH) serves as a coordination point for substrate. Position 195 (R195) interacts with FMN.

It belongs to the pyridoxamine 5'-phosphate oxidase family. In terms of assembly, homodimer. Requires FMN as cofactor.

It carries out the reaction pyridoxamine 5'-phosphate + O2 + H2O = pyridoxal 5'-phosphate + H2O2 + NH4(+). It catalyses the reaction pyridoxine 5'-phosphate + O2 = pyridoxal 5'-phosphate + H2O2. Its pathway is cofactor metabolism; pyridoxal 5'-phosphate salvage; pyridoxal 5'-phosphate from pyridoxamine 5'-phosphate: step 1/1. It functions in the pathway cofactor metabolism; pyridoxal 5'-phosphate salvage; pyridoxal 5'-phosphate from pyridoxine 5'-phosphate: step 1/1. Catalyzes the oxidation of either pyridoxine 5'-phosphate (PNP) or pyridoxamine 5'-phosphate (PMP) into pyridoxal 5'-phosphate (PLP). This chain is Pyridoxine/pyridoxamine 5'-phosphate oxidase, found in Chromobacterium violaceum (strain ATCC 12472 / DSM 30191 / JCM 1249 / CCUG 213 / NBRC 12614 / NCIMB 9131 / NCTC 9757 / MK).